Here is a 437-residue protein sequence, read N- to C-terminus: Protein farnesyltransferase subunit beta (437 aa).

PFTB repeat units lie at residues 123-164, 174-215, 222-263, 270-312, and 332-374; these read ATDV…CIIG, REKL…SLTN, FEGT…VILK, LKSL…PLLH, and QQAL…SIAQ. Residues 248–251 and 291–294 each bind (2E,6E)-farnesyl diphosphate; these read HGGY and RCNK. 2 residues coordinate Zn(2+): Asp297 and Cys299. Position 300-303 (300-303) interacts with (2E,6E)-farnesyl diphosphate; it reads YSFW. A Zn(2+)-binding site is contributed by His362. Position 436 is a phosphothreonine (Thr436).

The protein belongs to the protein prenyltransferase subunit beta family. Heterodimer of FNTA and FNTB. The cofactor is Zn(2+).

The catalysed reaction is L-cysteinyl-[protein] + (2E,6E)-farnesyl diphosphate = S-(2E,6E)-farnesyl-L-cysteinyl-[protein] + diphosphate. Functionally, essential subunit of the farnesyltransferase complex. Catalyzes the transfer of a farnesyl moiety from farnesyl diphosphate to a cysteine at the fourth position from the C-terminus of several proteins having the C-terminal sequence Cys-aliphatic-aliphatic-X. In Homo sapiens (Human), this protein is Protein farnesyltransferase subunit beta (FNTB).